The following is a 168-amino-acid chain: CASP-like protein 1U1 (168 aa).

Residues 1-6 (MDGAAR) lie on the Cytoplasmic side of the membrane. A helical membrane pass occupies residues 7–27 (AVSLFFRIAVVGLSVAAAVVM). Residues 28–49 (ATASQAFPFNYGGAVSYTKYPA) lie on the Extracellular side of the membrane. The chain crosses the membrane as a helical span at residues 50–70 (FVYFVVAAVVSAVCSAAALYL). The Cytoplasmic segment spans residues 71 to 80 (SVVREAAAGW). A helical transmembrane segment spans residues 81 to 101 (AVALLDVVTMGLLFSAAGAVF). At 102-138 (AVRRMAPLYLGVAGADTVAGRWVNGEFCHAAGAFCWR) the chain is on the extracellular side. The chain crosses the membrane as a helical span at residues 139 to 159 (VTTSAIICAFAAAAVSVAVLT). At 160-168 (KGARHRGKH) the chain is on the cytoplasmic side.

It belongs to the Casparian strip membrane proteins (CASP) family. In terms of assembly, homodimer and heterodimers.

It is found in the cell membrane. The sequence is that of CASP-like protein 1U1 from Oryza sativa subsp. japonica (Rice).